We begin with the raw amino-acid sequence, 346 residues long: Methionine import ATP-binding protein MetN 1 (346 aa).

The 240-residue stretch at 2-241 (IELKNVSKVF…PQHVTTKKFV (240 aa)) folds into the ABC transporter domain. Residue 38–45 (GYSGAGKS) participates in ATP binding.

Belongs to the ABC transporter superfamily. Methionine importer (TC 3.A.1.24) family. The complex is composed of two ATP-binding proteins (MetN), two transmembrane proteins (MetI) and a solute-binding protein (MetQ).

The protein resides in the cell membrane. The enzyme catalyses L-methionine(out) + ATP + H2O = L-methionine(in) + ADP + phosphate + H(+). It catalyses the reaction D-methionine(out) + ATP + H2O = D-methionine(in) + ADP + phosphate + H(+). Functionally, part of the ABC transporter complex MetNIQ involved in methionine import. Responsible for energy coupling to the transport system. In Bacillus anthracis, this protein is Methionine import ATP-binding protein MetN 1.